We begin with the raw amino-acid sequence, 505 residues long: 2,3-bisphosphoglycerate-independent phosphoglycerate mutase (505 aa).

Mn(2+) contacts are provided by aspartate 12 and serine 62. Serine 62 functions as the Phosphoserine intermediate in the catalytic mechanism. Residues histidine 123, 153–154 (RD), arginine 185, arginine 191, 257–260 (RPDR), and lysine 330 contribute to the substrate site. The Mn(2+) site is built by aspartate 397, histidine 401, aspartate 438, histidine 439, and histidine 456.

It belongs to the BPG-independent phosphoglycerate mutase family. As to quaternary structure, monomer. Mn(2+) serves as cofactor.

The enzyme catalyses (2R)-2-phosphoglycerate = (2R)-3-phosphoglycerate. Its pathway is carbohydrate degradation; glycolysis; pyruvate from D-glyceraldehyde 3-phosphate: step 3/5. Its function is as follows. Catalyzes the interconversion of 2-phosphoglycerate and 3-phosphoglycerate. This is 2,3-bisphosphoglycerate-independent phosphoglycerate mutase from Staphylococcus aureus (strain Mu50 / ATCC 700699).